A 288-amino-acid polypeptide reads, in one-letter code: Phosphatidylserine decarboxylase proenzyme (288 aa).

Active-site charge relay system; for autoendoproteolytic cleavage activity residues include aspartate 91, histidine 148, and serine 254. The Schiff-base intermediate with substrate; via pyruvic acid; for decarboxylase activity role is filled by serine 254. Serine 254 carries the post-translational modification Pyruvic acid (Ser); by autocatalysis.

This sequence belongs to the phosphatidylserine decarboxylase family. PSD-B subfamily. Prokaryotic type I sub-subfamily. Heterodimer of a large membrane-associated beta subunit and a small pyruvoyl-containing alpha subunit. The cofactor is pyruvate. Is synthesized initially as an inactive proenzyme. Formation of the active enzyme involves a self-maturation process in which the active site pyruvoyl group is generated from an internal serine residue via an autocatalytic post-translational modification. Two non-identical subunits are generated from the proenzyme in this reaction, and the pyruvate is formed at the N-terminus of the alpha chain, which is derived from the carboxyl end of the proenzyme. The autoendoproteolytic cleavage occurs by a canonical serine protease mechanism, in which the side chain hydroxyl group of the serine supplies its oxygen atom to form the C-terminus of the beta chain, while the remainder of the serine residue undergoes an oxidative deamination to produce ammonia and the pyruvoyl prosthetic group on the alpha chain. During this reaction, the Ser that is part of the protease active site of the proenzyme becomes the pyruvoyl prosthetic group, which constitutes an essential element of the active site of the mature decarboxylase.

The protein localises to the cell membrane. It catalyses the reaction a 1,2-diacyl-sn-glycero-3-phospho-L-serine + H(+) = a 1,2-diacyl-sn-glycero-3-phosphoethanolamine + CO2. Its pathway is phospholipid metabolism; phosphatidylethanolamine biosynthesis; phosphatidylethanolamine from CDP-diacylglycerol: step 2/2. Its function is as follows. Catalyzes the formation of phosphatidylethanolamine (PtdEtn) from phosphatidylserine (PtdSer). This Pseudoalteromonas translucida (strain TAC 125) protein is Phosphatidylserine decarboxylase proenzyme.